The chain runs to 450 residues: tRNA modification GTPase MnmE (450 aa).

The (6S)-5-formyl-5,6,7,8-tetrahydrofolate site is built by Arg-23, Glu-79, and Lys-118. One can recognise a TrmE-type G domain in the interval 214 to 374 (GITLILVGKP…LKEHILNKVG (161 aa)). Asn-224 contributes to the K(+) binding site. Residues 224-229 (NAGKSS), 243-249 (TSIAGTT), and 268-271 (DTAG) contribute to the GTP site. Ser-228 contributes to the Mg(2+) binding site. Residues Thr-243, Ile-245, and Thr-248 each contribute to the K(+) site. A Mg(2+)-binding site is contributed by Thr-249. (6S)-5-formyl-5,6,7,8-tetrahydrofolate is bound at residue Lys-450.

It belongs to the TRAFAC class TrmE-Era-EngA-EngB-Septin-like GTPase superfamily. TrmE GTPase family. Homodimer. Heterotetramer of two MnmE and two MnmG subunits. Requires K(+) as cofactor.

It is found in the cytoplasm. Exhibits a very high intrinsic GTPase hydrolysis rate. Involved in the addition of a carboxymethylaminomethyl (cmnm) group at the wobble position (U34) of certain tRNAs, forming tRNA-cmnm(5)s(2)U34. This is tRNA modification GTPase MnmE from Francisella tularensis subsp. holarctica (strain OSU18).